Reading from the N-terminus, the 364-residue chain is tRNA 2-selenouridine synthase (364 aa).

The 124-residue stretch at 12-135 (FLNDRPMMDT…MRTFLLDTTE (124 aa)) folds into the Rhodanese domain. Cys-95 acts as the S-selanylcysteine intermediate in catalysis.

It belongs to the SelU family. Monomer.

The catalysed reaction is 5-methylaminomethyl-2-thiouridine(34) in tRNA + selenophosphate + (2E)-geranyl diphosphate + H2O + H(+) = 5-methylaminomethyl-2-selenouridine(34) in tRNA + (2E)-thiogeraniol + phosphate + diphosphate. It carries out the reaction 5-methylaminomethyl-2-thiouridine(34) in tRNA + (2E)-geranyl diphosphate = 5-methylaminomethyl-S-(2E)-geranyl-thiouridine(34) in tRNA + diphosphate. The enzyme catalyses 5-methylaminomethyl-S-(2E)-geranyl-thiouridine(34) in tRNA + selenophosphate + H(+) = 5-methylaminomethyl-2-(Se-phospho)selenouridine(34) in tRNA + (2E)-thiogeraniol. It catalyses the reaction 5-methylaminomethyl-2-(Se-phospho)selenouridine(34) in tRNA + H2O = 5-methylaminomethyl-2-selenouridine(34) in tRNA + phosphate. Its function is as follows. Involved in the post-transcriptional modification of the uridine at the wobble position (U34) of tRNA(Lys), tRNA(Glu) and tRNA(Gln). Catalyzes the conversion of 2-thiouridine (S2U-RNA) to 2-selenouridine (Se2U-RNA). Acts in a two-step process involving geranylation of 2-thiouridine (S2U) to S-geranyl-2-thiouridine (geS2U) and subsequent selenation of the latter derivative to 2-selenouridine (Se2U) in the tRNA chain. This chain is tRNA 2-selenouridine synthase, found in Pseudomonas fluorescens (strain ATCC BAA-477 / NRRL B-23932 / Pf-5).